A 1037-amino-acid polypeptide reads, in one-letter code: PH and SEC7 domain-containing protein 3 (1037 aa).

The segment at 37–70 (EEKTPDSSDHGGSTLLPPTVTNEFPEYGTMEEGG) is disordered. Residue Ser-76 is modified to Phosphoserine. Disordered stretches follow at residues 169 to 189 (TASH…GKSP), 236 to 255 (RVPE…HNPV), 262 to 284 (REQR…SMGR), 304 to 335 (EAES…ACGV), and 353 to 375 (APSE…ESGE). The segment covering 237 to 251 (VPESACPVSSSSAGS) has biased composition (low complexity). A compositionally biased stretch (basic and acidic residues) spans 262 to 277 (REQRSDLGREHPRGYD). One can recognise an SEC7 domain in the interval 515 to 723 (NSVYTRGPQE…KALYNSIKNE (209 aa)). Residues 730–747 (DDEEKKKSPSEGTDEKAN) show a composition bias toward basic and acidic residues. The disordered stretch occupies residues 730 to 762 (DDEEKKKSPSEGTDEKANGTHPKTISRIGSTTN). Positions 750–762 (HPKTISRIGSTTN) are enriched in polar residues. A Phosphoserine modification is found at Ser-759. The region spanning 774 to 887 (AVYKSGFLAR…WINKINCVAA (114 aa)) is the PH domain. A coiled-coil region spans residues 911-941 (ATTTKLSQEEQLKSHESKLKQITTELAEHRS). The disordered stretch occupies residues 984–1037 (LLTTDGNEPVGLKKSHSSPSLNPDASPVTAKVKRNVSERKDHRPETPGIKQKVT). 5 positions are modified to phosphoserine: Ser-998, Ser-1000, Ser-1001, Ser-1003, and Ser-1009. Residues 1018 to 1028 (NVSERKDHRPE) are compositionally biased toward basic and acidic residues.

In terms of tissue distribution, ubiquitously expressed, with highest levels in liver. Present in brain, with highest levels in olfactory bulb, cortex, hippocampal pyramidal cell layer and cerebellar granule cell layer (at protein level).

Its subcellular location is the cell membrane. It localises to the cell projection. The protein localises to the ruffle membrane. The protein resides in the postsynaptic density. In terms of biological role, guanine nucleotide exchange factor for ARF6. The polypeptide is PH and SEC7 domain-containing protein 3 (Psd3) (Mus musculus (Mouse)).